We begin with the raw amino-acid sequence, 766 residues long: ATP-dependent RNA helicase DBP4 (766 aa).

Positions 1–18 (MGKKQNNRKVVKSQRKSH) are enriched in basic residues. The tract at residues 1 to 25 (MGKKQNNRKVVKSQRKSHREKEEET) is disordered. The Q motif motif lies at 46–74 (SQFSDLPISEETARGLKEASFASLTDIQK). In terms of domain architecture, Helicase ATP-binding spans 77 to 251 (IPISLKGEDV…RLSLANPKRV (175 aa)). 90 to 97 (AKTGSGKT) provides a ligand contact to ATP. A DEAD box motif is present at residues 199–202 (DEAD). The region spanning 265–437 (SLEQYYIKIP…TIRPQLQSLC (173 aa)) is the Helicase C-terminal domain. 3 disordered regions span residues 488–525 (KIKF…EEDK), 572–614 (KRQD…ANKL), and 649–752 (NKET…EPQT). Composition is skewed to basic and acidic residues over residues 493–502 (GGSDNKEKKN), 572–581 (KRQDHELRDD), 660–671 (IEDKLTAKEKRQ), 678–687 (KEMEKNMRQE), and 709–738 (DRDL…NVNK). Residues 739–752 (DEDDGVVEYDEPQT) show a composition bias toward acidic residues.

This sequence belongs to the DEAD box helicase family. DDX10/DBP4 subfamily. As to quaternary structure, interacts with the U3 and U14 snoRNAs. Associates with pre-ribosomal complexes.

The protein localises to the nucleus. It is found in the nucleolus. It catalyses the reaction ATP + H2O = ADP + phosphate + H(+). Its function is as follows. ATP-dependent RNA helicase required for ribosome biogenesis. Involved in the release of U14 snoRNA in pre-ribosomal complexes. Required for pre-rRNA cleavage at site A2. The chain is ATP-dependent RNA helicase DBP4 (DBP4) from Debaryomyces hansenii (strain ATCC 36239 / CBS 767 / BCRC 21394 / JCM 1990 / NBRC 0083 / IGC 2968) (Yeast).